A 405-amino-acid polypeptide reads, in one-letter code: Imidazolonepropionase (405 aa).

The Fe(3+) site is built by histidine 73 and histidine 75. 2 residues coordinate Zn(2+): histidine 73 and histidine 75. 4-imidazolone-5-propanoate is bound by residues arginine 82, tyrosine 145, and histidine 178. Tyrosine 145 lines the N-formimidoyl-L-glutamate pocket. Histidine 243 serves as a coordination point for Fe(3+). Histidine 243 serves as a coordination point for Zn(2+). Glutamine 246 contacts 4-imidazolone-5-propanoate. Aspartate 318 is a Fe(3+) binding site. A Zn(2+)-binding site is contributed by aspartate 318. N-formimidoyl-L-glutamate-binding residues include asparagine 320 and glycine 322. Threonine 323 is a 4-imidazolone-5-propanoate binding site.

It belongs to the metallo-dependent hydrolases superfamily. HutI family. Zn(2+) is required as a cofactor. Requires Fe(3+) as cofactor.

Its subcellular location is the cytoplasm. It carries out the reaction 4-imidazolone-5-propanoate + H2O = N-formimidoyl-L-glutamate. It participates in amino-acid degradation; L-histidine degradation into L-glutamate; N-formimidoyl-L-glutamate from L-histidine: step 3/3. Its function is as follows. Catalyzes the hydrolytic cleavage of the carbon-nitrogen bond in imidazolone-5-propanoate to yield N-formimidoyl-L-glutamate. It is the third step in the universal histidine degradation pathway. The polypeptide is Imidazolonepropionase (Brucella abortus (strain S19)).